The chain runs to 469 residues: Glutamate--tRNA ligase (469 aa).

Residues 11–21 (PSPTGFIHLGN) carry the 'HIGH' region motif. The 'KMSKS' region signature appears at 243 to 247 (KMSKR). Residue K246 coordinates ATP.

This sequence belongs to the class-I aminoacyl-tRNA synthetase family. Glutamate--tRNA ligase type 1 subfamily. Monomer.

Its subcellular location is the cytoplasm. The enzyme catalyses tRNA(Glu) + L-glutamate + ATP = L-glutamyl-tRNA(Glu) + AMP + diphosphate. In terms of biological role, catalyzes the attachment of glutamate to tRNA(Glu) in a two-step reaction: glutamate is first activated by ATP to form Glu-AMP and then transferred to the acceptor end of tRNA(Glu). The chain is Glutamate--tRNA ligase from Burkholderia cenocepacia (strain ATCC BAA-245 / DSM 16553 / LMG 16656 / NCTC 13227 / J2315 / CF5610) (Burkholderia cepacia (strain J2315)).